Consider the following 415-residue polypeptide: Ankyrin repeat domain-containing protein 10 (415 aa).

ANK repeat units follow at residues 20 to 49 (SLRFPLHRACRDGDLVALCSLLPHTPRAHL), 56 to 85 (YGWTPVHWAAHFGKLECLMQLVRAGASLNV), 90 to 119 (YAQTPAHIAAFGGHPQCLVWLIQAGANINK), and 123 to 152 (EGETPIHKAARSGSLECITALVGSGAHTDL). The segment covering 303-325 (TGSNGVSNGQPLSSGQASVSANG) has biased composition (polar residues). The tract at residues 303-330 (TGSNGVSNGQPLSSGQASVSANGTEEPE) is disordered.

The polypeptide is Ankyrin repeat domain-containing protein 10 (Ankrd10) (Mus musculus (Mouse)).